Here is a 24-residue protein sequence, read N- to C-terminus: Humanin-like 9 (24 aa).

The protein belongs to the humanin family. As to expression, highly expressed in the kidney, heart muscle and testis.

It localises to the secreted. The protein localises to the cytoplasm. Functionally, plays a role as a neuroprotective and antiapoptotic factor. The sequence is that of Humanin-like 9 from Homo sapiens (Human).